A 389-amino-acid chain; its full sequence is Large envelope protein (389 aa).

Met1 carries the post-translational modification N-acetylmethionine. A lipid anchor (N-myristoyl glycine; by host) is attached at Gly2. Residues 2–108 (GTNLSVPNPL…PPLRDSHPQA (107 aa)) form a pre-S1 region. The pre-S stretch occupies residues 2–163 (GTNLSVPNPL…SARTGDPVTI (162 aa)). At 2-170 (GTNLSVPNPL…VTIMENITSG (169 aa)) the chain is on the virion surface; in external conformation side. Residues 2-242 (GTNLSVPNPL…PGYRWMCLRR (241 aa)) are Intravirion; in internal conformation-facing. A compositionally biased stretch (polar residues) spans 77-95 (VSTIPPPASTNRQSGRQPT). The tract at residues 77–103 (VSTIPPPASTNRQSGRQPTPISPPLRD) is disordered. The segment at 109-163 (MQWNSTALHQALQDPRVRGLYLPAGGSSSGTVNPAPNIASHISSISARTGDPVTI) is pre-S2. Residues 171–191 (FLGPLLVLQAGFFLLTRILTI) traverse the membrane as a helical segment. Residues 192 to 242 (PQSLDSWWTSLNFLGGSPVCLGQNSQSPTSNHSPTSCPPICPGYRWMCLRR) lie on the Intravirion; in external conformation side of the membrane. Residues 243 to 263 (FIIFLFILLLCLIFLLVLLDY) traverse the membrane as a helical segment. At 264 to 337 (QGMLPVCPLI…WASVRFSWLS (74 aa)) the chain is on the virion surface side. Asn309 carries N-linked (GlcNAc...) asparagine; by host glycosylation. A helical transmembrane segment spans residues 338–358 (LLVPFVQWFVGLSPTVWLSAI). The Intravirion portion of the chain corresponds to 359–364 (WMMWYW). Residues 365 to 387 (GPSLYSIVSPFIPLLPIFFCLWV) form a helical membrane-spanning segment. Topologically, residues 388–389 (YI) are virion surface.

It belongs to the orthohepadnavirus major surface antigen family. As to quaternary structure, in its internal form (Li-HBsAg), interacts with the capsid protein and with the isoform S. Interacts with host chaperone CANX. Associates with host chaperone CANX through its pre-S2 N glycan; this association may be essential for isoform M proper secretion. In terms of assembly, interacts with isoform L. Interacts with the antigens of satellite virus HDV (HDVAgs); this interaction is required for encapsidation of HDV genomic RNA. Post-translationally, isoform M is N-terminally acetylated by host at a ratio of 90%, and N-glycosylated by host at the pre-S2 region. In terms of processing, myristoylated.

The protein localises to the virion membrane. The large envelope protein exists in two topological conformations, one which is termed 'external' or Le-HBsAg and the other 'internal' or Li-HBsAg. In its external conformation the protein attaches the virus to cell receptors and thereby initiating infection. This interaction determines the species specificity and liver tropism. This attachment induces virion internalization predominantly through caveolin-mediated endocytosis. The large envelope protein also assures fusion between virion membrane and endosomal membrane. In its internal conformation the protein plays a role in virion morphogenesis and mediates the contact with the nucleocapsid like a matrix protein. Functionally, the middle envelope protein plays an important role in the budding of the virion. It is involved in the induction of budding in a nucleocapsid independent way. In this process the majority of envelope proteins bud to form subviral lipoprotein particles of 22 nm of diameter that do not contain a nucleocapsid. This is Large envelope protein from Hepatitis B virus genotype A2 subtype adw (isolate Japan/Nishioka/1983) (HBV-A).